Here is a 116-residue protein sequence, read N- to C-terminus: Large ribosomal subunit protein bL20 (116 aa).

It belongs to the bacterial ribosomal protein bL20 family.

Its function is as follows. Binds directly to 23S ribosomal RNA and is necessary for the in vitro assembly process of the 50S ribosomal subunit. It is not involved in the protein synthesizing functions of that subunit. In Bacteroides thetaiotaomicron (strain ATCC 29148 / DSM 2079 / JCM 5827 / CCUG 10774 / NCTC 10582 / VPI-5482 / E50), this protein is Large ribosomal subunit protein bL20.